We begin with the raw amino-acid sequence, 421 residues long: Probable indole-3-pyruvate monooxygenase YUCCA9 (421 aa).

Residue 29 to 34 (GAGPSG) participates in FAD binding. 196 to 201 (GCGNSG) is a binding site for NADP(+).

The protein belongs to the FMO family. FAD is required as a cofactor.

It catalyses the reaction indole-3-pyruvate + NADPH + O2 + H(+) = (indol-3-yl)acetate + CO2 + NADP(+) + H2O. It functions in the pathway plant hormone metabolism; auxin biosynthesis. Its function is as follows. Involved in auxin biosynthesis. Belongs to the set of redundant YUCCA genes probably responsible for auxin biosynthesis in roots. This chain is Probable indole-3-pyruvate monooxygenase YUCCA9 (YUC9), found in Arabidopsis thaliana (Mouse-ear cress).